A 1730-amino-acid polypeptide reads, in one-letter code: Nebulin-related-anchoring protein (1730 aa).

Residues 4–64 (QPCSRCGYGV…HAHNPKNNTF (61 aa)) form the LIM zinc-binding domain. 44 Nebulin repeats span residues 63-97 (TFTS…QCKS), 156-166 (EYTEDYEQPRG), 175-202 (TPAY…ERIS), 203-237 (RFST…QQRG), 246-273 (TPAY…KEMR), 298-307 (YPEEYEEHRG), 316-343 (TPAY…KMKG), 348-382 (HSLP…SSRG), 389-417 (ETPQ…NHMR), 419-453 (RYEG…HDIV), 487-521 (KYSS…KNKL), 522-556 (NYTL…KTKG), 558-592 (GFEM…KTKG), 602-626 (LLHS…ESKT), 627-661 (RFHL…EYTV), 662-692 (LPED…WMKG), 702-724 (NLEQ…RVDE), 726-760 (KFTS…QSVH), 761-795 (QYTI…NQKA), 797-831 (GFEL…RSRG), 844-869 (QMSH…DTKS), 870-896 (QCHV…VGYK), 901-935 (HFTA…WMKG), 945-963 (NVEQ…KYRQ), 969-1003 (KFTS…NIKH), 1004-1038 (HYTP…KLRD), 1040-1074 (GYKL…KMKG), 1078-1112 (GSRS…HSKA), 1113-1139 (QFHL…QDYK), 1144-1178 (QYTS…FMRG), 1183-1206 (IPGT…KYRQ), 1212-1246 (KYTA…DARH), 1247-1281 (EYTM…NLRA), 1283-1317 (GYKL…KERG), 1321-1355 (GPQS…SSQA), 1356-1390 (QFHL…KFTA), 1391-1421 (LPED…GMKG), 1429-1449 (SPQM…KYRK), 1455-1481 (KFTT…RMYR), 1490-1524 (RYTL…QTRA), 1526-1560 (SYDF…RDRG), 1564-1598 (GYRS…KSRS), 1599-1626 (QFHS…HYRQ), and 1640-1664 (LRHA…LTRG). A Phosphoserine modification is found at S1081. The interval 1595-1620 (KSRSQFHSSTDQPGLLQAKRSQQLAS) is disordered. Positions 1596–1606 (SRSQFHSSTDQ) are enriched in polar residues.

As to quaternary structure, interacts with actin, alpha-actinin, KLHL41, TLN1 and VCL. Interacts with CSRP3. In terms of tissue distribution, expressed in cardiac and skeletal muscle.

May be involved in anchoring the terminal actin filaments in the myofibril to the membrane and in transmitting tension from the myofibrils to the extracellular matrix. The polypeptide is Nebulin-related-anchoring protein (Homo sapiens (Human)).